The chain runs to 117 residues: Large ribosomal subunit protein bL20 (117 aa).

It belongs to the bacterial ribosomal protein bL20 family.

Its function is as follows. Binds directly to 23S ribosomal RNA and is necessary for the in vitro assembly process of the 50S ribosomal subunit. It is not involved in the protein synthesizing functions of that subunit. The sequence is that of Large ribosomal subunit protein bL20 from Rickettsia canadensis (strain McKiel).